A 556-amino-acid chain; its full sequence is Glutamine--tRNA ligase (556 aa).

The 'HIGH' region motif lies at 35–45 (PEPNGYLHIGH). ATP contacts are provided by residues 36 to 38 (EPN) and 42 to 48 (HIGHAKS). Residues D68 and Y213 each coordinate L-glutamine. ATP-binding positions include T232 and 262 to 263 (RL). Residues 269–273 (VTSKR) carry the 'KMSKS' region motif.

It belongs to the class-I aminoacyl-tRNA synthetase family. Monomer.

The protein localises to the cytoplasm. The catalysed reaction is tRNA(Gln) + L-glutamine + ATP = L-glutaminyl-tRNA(Gln) + AMP + diphosphate. In Pseudomonas aeruginosa (strain LESB58), this protein is Glutamine--tRNA ligase.